A 474-amino-acid chain; its full sequence is Bifunctional protein HldE (474 aa).

The segment at 1-321 is ribokinase; sequence MILSSSLRPT…EYLHSSHQGE (321 aa). Position 198–201 (198–201) interacts with ATP; that stretch reads NKKE. The active site involves D266. A cytidylyltransferase region spans residues 348-474; it reads FTNGCFDILH…SAVVKKIQGS (127 aa).

In the N-terminal section; belongs to the carbohydrate kinase PfkB family. This sequence in the C-terminal section; belongs to the cytidylyltransferase family. Homodimer.

It catalyses the reaction D-glycero-beta-D-manno-heptose 7-phosphate + ATP = D-glycero-beta-D-manno-heptose 1,7-bisphosphate + ADP + H(+). It carries out the reaction D-glycero-beta-D-manno-heptose 1-phosphate + ATP + H(+) = ADP-D-glycero-beta-D-manno-heptose + diphosphate. It functions in the pathway nucleotide-sugar biosynthesis; ADP-L-glycero-beta-D-manno-heptose biosynthesis; ADP-L-glycero-beta-D-manno-heptose from D-glycero-beta-D-manno-heptose 7-phosphate: step 1/4. Its pathway is nucleotide-sugar biosynthesis; ADP-L-glycero-beta-D-manno-heptose biosynthesis; ADP-L-glycero-beta-D-manno-heptose from D-glycero-beta-D-manno-heptose 7-phosphate: step 3/4. Its function is as follows. Catalyzes the phosphorylation of D-glycero-D-manno-heptose 7-phosphate at the C-1 position to selectively form D-glycero-beta-D-manno-heptose-1,7-bisphosphate. Catalyzes the ADP transfer from ATP to D-glycero-beta-D-manno-heptose 1-phosphate, yielding ADP-D-glycero-beta-D-manno-heptose. This is Bifunctional protein HldE from Wolinella succinogenes (strain ATCC 29543 / DSM 1740 / CCUG 13145 / JCM 31913 / LMG 7466 / NCTC 11488 / FDC 602W) (Vibrio succinogenes).